The following is a 1175-amino-acid chain: Pyruvate carboxylase (1175 aa).

The Biotin carboxylation domain occupies 22–474 (NANKILVANR…WTTFIDDTPS (453 aa)). Positions 140, 224, and 259 each coordinate ATP. In terms of domain architecture, ATP-grasp spans 144 to 341 (RNLAGKCNVP…IVAAQIQIAA (198 aa)). Arginine 316 is an active-site residue. The 268-residue stretch at 561-828 (CLIMDTTWRD…NTGITEQNAR (268 aa)) folds into the Pyruvate carboxyltransferase domain. Substrate is bound by residues 569–573 (RDAHQ) and arginine 642. Aspartate 570 provides a ligand contact to a divalent metal cation. Lysine 738, histidine 768, and histidine 770 together coordinate a divalent metal cation. N6-carboxylysine is present on lysine 738. Threonine 902 lines the substrate pocket. A Biotinyl-binding domain is found at 1099–1174 (KADAHNPNEV…DAGDLICKIT (76 aa)). Position 1140 is an N6-biotinyllysine (lysine 1140).

It depends on biotin as a cofactor. The cofactor is Zn(2+).

The protein localises to the cytoplasm. The catalysed reaction is hydrogencarbonate + pyruvate + ATP = oxaloacetate + ADP + phosphate + H(+). It functions in the pathway carbohydrate biosynthesis; gluconeogenesis. Functionally, pyruvate carboxylase catalyzes a 2-step reaction, involving the ATP-dependent carboxylation of the covalently attached biotin in the first step and the transfer of the carboxyl group to pyruvate in the second. This chain is Pyruvate carboxylase (PYC), found in Pichia angusta (Yeast).